The chain runs to 317 residues: MSLMSIRLKLSSLLMGIAIFAIGFGIIYAILYYIGLNIGAIALLMVLLPIFIIMDIVQWLFGPYMIGAVYRTHKLQPTEPEYNMLTSIVSEVARNNNIRMPEVYIAEVDMPNAFAYGSPIAGRRIAVTRGLLRILEPDEIKAVIGHEMGHLRHRDVEMLLAIGLIPTLIFYFGYTLLFSGERGRNAGGIVLLAIIAMAASFLFRFLILAFNRMRESYADVNSALTVDGGAEKLQTALAKIVAATGRTGRYTRRRRNTPSSSVTEMLFFSNPNQSANEDYRKLLEEWKTAKVSLFADFFSDHPHPAKRIQRLEKLKMS.

A run of 2 helical transmembrane segments spans residues 14-34 (LMGIAIFAIGFGIIYAILYYI) and 41-61 (IALLMVLLPIFIIMDIVQWLF). Histidine 146 contacts Zn(2+). Glutamate 147 is an active-site residue. Histidine 150 serves as a coordination point for Zn(2+). The next 2 membrane-spanning stretches (helical) occupy residues 158–178 (MLLAIGLIPTLIFYFGYTLLF) and 189–209 (IVLLAIIAMAASFLFRFLILA). Glutamate 215 lines the Zn(2+) pocket.

This sequence belongs to the peptidase M48B family. Requires Zn(2+) as cofactor.

It localises to the cell membrane. The polypeptide is Protease HtpX homolog (Thermoplasma acidophilum (strain ATCC 25905 / DSM 1728 / JCM 9062 / NBRC 15155 / AMRC-C165)).